The following is a 234-amino-acid chain: Biosynthetic peptidoglycan transglycosylase (234 aa).

A helical membrane pass occupies residues 11-31 (RFLLFAMLGFVGLSVLLVLVF).

It belongs to the glycosyltransferase 51 family.

It localises to the cell inner membrane. It catalyses the reaction [GlcNAc-(1-&gt;4)-Mur2Ac(oyl-L-Ala-gamma-D-Glu-L-Lys-D-Ala-D-Ala)](n)-di-trans,octa-cis-undecaprenyl diphosphate + beta-D-GlcNAc-(1-&gt;4)-Mur2Ac(oyl-L-Ala-gamma-D-Glu-L-Lys-D-Ala-D-Ala)-di-trans,octa-cis-undecaprenyl diphosphate = [GlcNAc-(1-&gt;4)-Mur2Ac(oyl-L-Ala-gamma-D-Glu-L-Lys-D-Ala-D-Ala)](n+1)-di-trans,octa-cis-undecaprenyl diphosphate + di-trans,octa-cis-undecaprenyl diphosphate + H(+). The protein operates within cell wall biogenesis; peptidoglycan biosynthesis. In terms of biological role, peptidoglycan polymerase that catalyzes glycan chain elongation from lipid-linked precursors. This is Biosynthetic peptidoglycan transglycosylase from Chromohalobacter salexigens (strain ATCC BAA-138 / DSM 3043 / CIP 106854 / NCIMB 13768 / 1H11).